The sequence spans 333 residues: Biotin synthase (333 aa).

A Radical SAM core domain is found at Arg-51–Arg-278. Residues Cys-66, Cys-70, and Cys-73 each contribute to the [4Fe-4S] cluster site. Residues Cys-110, Cys-141, Cys-201, and Arg-273 each coordinate [2Fe-2S] cluster.

Belongs to the radical SAM superfamily. Biotin synthase family. As to quaternary structure, homodimer. It depends on [4Fe-4S] cluster as a cofactor. Requires [2Fe-2S] cluster as cofactor.

It catalyses the reaction (4R,5S)-dethiobiotin + (sulfur carrier)-SH + 2 reduced [2Fe-2S]-[ferredoxin] + 2 S-adenosyl-L-methionine = (sulfur carrier)-H + biotin + 2 5'-deoxyadenosine + 2 L-methionine + 2 oxidized [2Fe-2S]-[ferredoxin]. It functions in the pathway cofactor biosynthesis; biotin biosynthesis; biotin from 7,8-diaminononanoate: step 2/2. Its function is as follows. Catalyzes the conversion of dethiobiotin (DTB) to biotin by the insertion of a sulfur atom into dethiobiotin via a radical-based mechanism. The sequence is that of Biotin synthase from Haemophilus influenzae (strain 86-028NP).